A 530-amino-acid polypeptide reads, in one-letter code: Cytochrome P450 monooxygenase sttB (530 aa).

Residue N5 is glycosylated (N-linked (GlcNAc...) asparagine). Residues 24–44 (LPILTVALLTGIASAVYINVS) form a helical membrane-spanning segment. A glycan (N-linked (GlcNAc...) asparagine) is linked at N230.

The protein belongs to the cytochrome P450 family. Requires heme as cofactor.

The protein localises to the membrane. It catalyses the reaction preaspterpenacid acid I + reduced [NADPH--hemoprotein reductase] + O2 = preaspterpenacid acid II + oxidized [NADPH--hemoprotein reductase] + H2O + H(+). It participates in secondary metabolite biosynthesis; terpenoid biosynthesis. Cytochrome P450 monooxygenase; part of the gene cluster that mediates the biosynthesis of aspterpenacids. Performs the C22-oxidative modification of the terpene synthase sttA product preaspterpenacid I to produce preaspterpenacid II. It has still to be determined how preaspterpenacid II is further modified to produce aspterpenacids. The polypeptide is Cytochrome P450 monooxygenase sttB (Aspergillus terreus (strain NIH 2624 / FGSC A1156)).